Reading from the N-terminus, the 194-residue chain is ATP-dependent Clp protease proteolytic subunit 1 (194 aa).

S98 (nucleophile) is an active-site residue. H123 is a catalytic residue.

The protein belongs to the peptidase S14 family. Fourteen ClpP subunits assemble into 2 heptameric rings which stack back to back to give a disk-like structure with a central cavity, resembling the structure of eukaryotic proteasomes.

It localises to the cytoplasm. It catalyses the reaction Hydrolysis of proteins to small peptides in the presence of ATP and magnesium. alpha-casein is the usual test substrate. In the absence of ATP, only oligopeptides shorter than five residues are hydrolyzed (such as succinyl-Leu-Tyr-|-NHMec, and Leu-Tyr-Leu-|-Tyr-Trp, in which cleavage of the -Tyr-|-Leu- and -Tyr-|-Trp bonds also occurs).. Its function is as follows. Cleaves peptides in various proteins in a process that requires ATP hydrolysis. Has a chymotrypsin-like activity. Plays a major role in the degradation of misfolded proteins. ClpXP1 is involved in the complete degradation of the Site-2 clipped anti-sigma-W factor RsiW. This results in the release of SigW and the transcription activation of the genes under the control of the sigma-W factor. In Halalkalibacterium halodurans (strain ATCC BAA-125 / DSM 18197 / FERM 7344 / JCM 9153 / C-125) (Bacillus halodurans), this protein is ATP-dependent Clp protease proteolytic subunit 1.